The following is a 492-amino-acid chain: Propanoyl-CoA:succinate CoA transferase (492 aa).

260-264 (GVGNI) provides a ligand contact to CoA. Glutamate 286 functions as the 5-glutamyl coenzyme A thioester intermediate in the catalytic mechanism. Residues asparagine 376 and glycine 380 each coordinate CoA.

Belongs to the acetyl-CoA hydrolase/transferase family.

The enzyme catalyses propanoyl-CoA + succinate = propanoate + succinyl-CoA. Functionally, catalyzes the transfer of coenzyme A from propionyl-CoA to succinate. Could be part of a pathway that converts succinate to propionate. The sequence is that of Propanoyl-CoA:succinate CoA transferase from Escherichia coli (strain K12).